A 391-amino-acid chain; its full sequence is MSLNPRDVVIVDFGRTPMGRSKGGMHRNTRAEDMSAHLISKLLERNGKVDPKEVEDVIWGCVNQTLEQGWNIARMASLMTQIPHTSAAQTVSRLCGSSMSALHTAAQAIMTGNGDVFVVGGVEHMGHVSMMHGVDPNPHLSLHAAKASGMMGLTAEMLGKMHGITREQQDLFGLRSHQLAHKATVEGKFKDEIIPMQGYDENGFLKVFDFDETIRPETTLEGLASLKPAFNPKGGTVTAGTSSQITDGASCMIVMSGQRAMDLGIQPLAVIRSMAVAGVDPAIMGYGPVPSTQKALKRAGLTMADIDFIELNEAFAAQALPVLKDLKVLDKMDEKVNLHGGAIALGHPFGCSGARISGTLLNVMKQNGGTLGVATMCVGLGQGITTVFERV.

The Acyl-thioester intermediate role is filled by C95. Catalysis depends on proton acceptor residues H347 and C377.

Belongs to the thiolase-like superfamily. Thiolase family. As to quaternary structure, heterotetramer of two alpha chains (FadB) and two beta chains (FadA).

The protein localises to the cytoplasm. It carries out the reaction an acyl-CoA + acetyl-CoA = a 3-oxoacyl-CoA + CoA. It participates in lipid metabolism; fatty acid beta-oxidation. Functionally, catalyzes the final step of fatty acid oxidation in which acetyl-CoA is released and the CoA ester of a fatty acid two carbons shorter is formed. This Pseudomonas putida (strain ATCC 700007 / DSM 6899 / JCM 31910 / BCRC 17059 / LMG 24140 / F1) protein is 3-ketoacyl-CoA thiolase.